We begin with the raw amino-acid sequence, 331 residues long: PHD finger protein 11 (331 aa).

The C2HC pre-PHD-type zinc-finger motif lies at 42–78 (KRTCALCPKDVEYNVLYFAQSENIAAHENCLLYSSGL). The PHD-type zinc-finger motif lies at 108–160 (LKCKFCHKRGATVGCDLKNCNKNYHFFCAKKDDAVPQSDGVRGIYKLLCQQHA).

Interacts with BRCA1 and RELA. Highly expressed in T and B-cells, as well as natural killer and mature dendritic cells. Expressed at higher levels in Th1 as compared to Th2 cells. Expressed at low levels in all normal tissues tested, including lung, testis, small intestine, breast, liver and placenta.

The protein localises to the nucleus. Functionally, positive regulator of Th1-type cytokine gene expression. This is PHD finger protein 11 (PHF11) from Homo sapiens (Human).